The following is a 602-amino-acid chain: mRNA-decapping enzyme 1A (602 aa).

At serine 82 the chain carries Phosphoserine. Basic and acidic residues predominate over residues 152–161; it reads RSQQAARDKQ. 3 disordered regions span residues 152–174, 191–234, and 267–291; these read RSQQ…DQRP, NQMG…PSGH, and GDAS…APQS. Residues serine 162, serine 199, and serine 200 each carry the phosphoserine modification. The segment covering 193–229 has biased composition (polar residues); sequence MGGSNISSPGLQPSTQLSNLGSTETLEETPSGSQDKS. Phosphoserine is present on residues serine 335 and serine 339. Threonine 367 carries the post-translational modification Phosphothreonine. Phosphoserine is present on serine 372. Arginine 395 carries the asymmetric dimethylarginine modification. Threonine 420 carries the post-translational modification Phosphothreonine. A phosphoserine mark is found at serine 441, serine 542, serine 543, and serine 545. Phosphothreonine is present on residues threonine 548 and threonine 551.

This sequence belongs to the DCP1 family. As to quaternary structure, forms a complex with EDC3, DCP2, DDX6 and EDC4/HEDLS, within this complex directly interacts with EDC3. Part of a cytoplasmic complex containing proteins involved in mRNA decay, including XRN1 and LSM1. Interacts with DCP1B. Interacts with DCP2. Interacts with DDX17 in an RNA-independent manner. Interacts with PNRC2. Interacts with SMAD4. Interacts with UPF1. Interacts with ZC3HAV1. Interacts with ZFP36L1. Interacts with NBDY. Interacts with DHX34; the interaction is RNA-independent. In terms of tissue distribution, ubiquitous, with highest expression in the spleen and testis (at protein level).

The protein localises to the cytoplasm. It localises to the P-body. The protein resides in the nucleus. The enzyme catalyses a 5'-end (N(7)-methyl 5'-triphosphoguanosine)-ribonucleoside in mRNA + H2O = N(7)-methyl-GDP + a 5'-end phospho-ribonucleoside in mRNA + 2 H(+). Necessary for the degradation of mRNAs, both in normal mRNA turnover and in nonsense-mediated mRNA decay. Removes the 7-methyl guanine cap structure from mRNA molecules, yielding a 5'-phosphorylated mRNA fragment and 7m-GDP. Contributes to the transactivation of target genes after stimulation by TGFB1. Essential for embryonic development. The sequence is that of mRNA-decapping enzyme 1A (Dcp1a) from Mus musculus (Mouse).